The sequence spans 439 residues: Xylose isomerase (439 aa).

Catalysis depends on residues histidine 98 and aspartate 101. Positions 229, 265, 268, 293, 304, 306, and 335 each coordinate Mg(2+).

It belongs to the xylose isomerase family. As to quaternary structure, homotetramer. It depends on Mg(2+) as a cofactor.

The protein resides in the cytoplasm. The catalysed reaction is alpha-D-xylose = alpha-D-xylulofuranose. Its function is as follows. Involved in D-xylose catabolism. The polypeptide is Xylose isomerase (xylA) (Staphylococcus xylosus).